A 224-amino-acid chain; its full sequence is Probable octanoyltransferase (224 aa).

The 172-residue stretch at 28-199 (GLTGDIALVT…KLALELGLTP (172 aa)) folds into the BPL/LPL catalytic domain. Substrate is bound by residues 66–73 (RGGDATYH), 130–132 (SIG), and 143–145 (GVA). Catalysis depends on Cys161, which acts as the Acyl-thioester intermediate.

Belongs to the LipB family.

It localises to the cytoplasm. It catalyses the reaction octanoyl-[ACP] + L-lysyl-[protein] = N(6)-octanoyl-L-lysyl-[protein] + holo-[ACP] + H(+). Its pathway is protein modification; protein lipoylation via endogenous pathway; protein N(6)-(lipoyl)lysine from octanoyl-[acyl-carrier-protein]: step 1/2. Its function is as follows. Catalyzes the transfer of endogenously produced octanoic acid from octanoyl-acyl-carrier-protein onto the lipoyl domains of lipoate-dependent enzymes. Lipoyl-ACP can also act as a substrate although octanoyl-ACP is likely to be the physiological substrate. This is Probable octanoyltransferase from Pyrobaculum aerophilum (strain ATCC 51768 / DSM 7523 / JCM 9630 / CIP 104966 / NBRC 100827 / IM2).